The chain runs to 736 residues: Elongation factor 2 (736 aa).

In terms of domain architecture, tr-type G spans 19–262 (DQIRNIGIIA…MVIKFVPNPR (244 aa)). Residues 28–35 (AHVDHGKT), 94–98 (DTPGH), and 148–151 (NKVD) each bind GTP. His602 carries the diphthamide modification.

Belongs to the TRAFAC class translation factor GTPase superfamily. Classic translation factor GTPase family. EF-G/EF-2 subfamily.

Its subcellular location is the cytoplasm. Functionally, catalyzes the GTP-dependent ribosomal translocation step during translation elongation. During this step, the ribosome changes from the pre-translocational (PRE) to the post-translocational (POST) state as the newly formed A-site-bound peptidyl-tRNA and P-site-bound deacylated tRNA move to the P and E sites, respectively. Catalyzes the coordinated movement of the two tRNA molecules, the mRNA and conformational changes in the ribosome. This Aeropyrum pernix (strain ATCC 700893 / DSM 11879 / JCM 9820 / NBRC 100138 / K1) protein is Elongation factor 2 (fusA).